The primary structure comprises 1170 residues: Cellulose synthase-like protein D2 (1170 aa).

Disordered regions lie at residues 1-48 (MASS…RRTH), 54-73 (SYSRDDLDSELGNSGDMSPE), and 269-295 (NEVDNGGGGGGGGGLGGGDGQPAEFTS). A compositionally biased stretch (low complexity) spans 10–24 (RHSNSSRLSRMSYSG). Over residues 273 to 288 (NGGGGGGGGGLGGGDG) the composition is skewed to gly residues. Helical transmembrane passes span 311 to 331 (VLSPYRLLILIRMAVLGLFLA) and 341 to 361 (AMWLWGMSVVCELWFGLSWLL). Aspartate 441 is a catalytic residue. Residues 527–551 (HAREEIKAMKRQREAALDDVVEAVK) are a coiled coil. Residue aspartate 873 is part of the active site. The next 6 helical transmembrane spans lie at 955 to 975 (IFLIVYCFLPALSLFSGQFIV), 981 to 1001 (TFLTYLLVITLTMCMLAVLEI), 1027 to 1047 (LAAVLQGLLKVIAGIEISFTL), 1070 to 1090 (SLMIPPIVIMMVNLIAIAVGF), 1104 to 1124 (LLGGVFFSFWVLAHLYPFAKG), and 1134 to 1154 (TIVFVWSGLLAITISLLWVAI).

It belongs to the glycosyltransferase 2 family. Plant cellulose synthase-like D subfamily.

It is found in the golgi apparatus membrane. In terms of biological role, thought to be a Golgi-localized beta-glycan synthase that polymerize the backbones of noncellulosic polysaccharides (hemicelluloses) of plant cell wall. The protein is Cellulose synthase-like protein D2 (CSLD2) of Oryza sativa subsp. japonica (Rice).